Reading from the N-terminus, the 127-residue chain is Fluoride-specific ion channel FluC (127 aa).

4 consecutive transmembrane segments (helical) span residues 4-24, 34-54, 65-85, and 97-117; these read IIYI…TQIA, FPFP…IGFF, FELR…FSTL, and FYGI…LAVL. Residues Gly-77 and Thr-80 each contribute to the Na(+) site.

The protein belongs to the fluoride channel Fluc/FEX (TC 1.A.43) family.

The protein resides in the cell inner membrane. It carries out the reaction fluoride(in) = fluoride(out). Na(+) is not transported, but it plays an essential structural role and its presence is essential for fluoride channel function. Its function is as follows. Fluoride-specific ion channel. Important for reducing fluoride concentration in the cell, thus reducing its toxicity. The sequence is that of Fluoride-specific ion channel FluC from Bacteroides fragilis (strain ATCC 25285 / DSM 2151 / CCUG 4856 / JCM 11019 / LMG 10263 / NCTC 9343 / Onslow / VPI 2553 / EN-2).